Consider the following 558-residue polypeptide: MKAAILATAAALTGSALADVAHMRRGHDSFHHRRAMHAQEPEETCGCTTEVITFYGSPTLVPISTPSATPTPAPAPETTSTEEVTTTLHSTSTSTVTVTATPETPEVTLPTPGVTSFSSTGVYTIPATTLTVTDTTTVCGATSTELPSGTATYGGVTTVVETSTTVVCPYATVKPSGSTVTSVIETTTYVCPSAGTYTVVPPTTTYVPTSTVMVYPTPATFTPGTYTQDAQTVTVTRTDYTYVCPTFHPELPSSSAPAPTTSAVPTTTAVPTSTVVPSSTTSVPASSSSSSAEVPQTTGSGQMGMTYSPYTNAGGCKSKADVLQDIATIKQKGFTHVRVYSTDCSSLEWIGEGAKQQGLIMILGVYIDSSGVSGAQSQVTDIANWAEWDLVSLIVVGNEAIQNGYCTASELASFITSAKQAFKAAGYSGQVTTTEPINVWESSGSALCSSIDILGANIHPFFNSEVTASQAGKFVQSQVDILEKICPGKDVINLETGWPSKGSANGLAIPGTSQQSEAIKSLRNDVGALSVFFSFSNDLWKSPGAFDVEQYWGCIDQF.

The first 18 residues, methionine 1–alanine 18, serve as a signal peptide directing secretion. Disordered regions lie at residues serine 64–proline 105 and leucine 251–methionine 305. 2 stretches are compositionally biased toward low complexity: residues proline 76 to proline 105 and proline 252 to alanine 292. A compositionally biased stretch (polar residues) spans glutamate 293 to methionine 305. Glutamate 399 functions as the Proton donor in the catalytic mechanism. Residue glutamate 495 is the Nucleophile of the active site.

It belongs to the glycosyl hydrolase 17 family.

It localises to the secreted. The protein localises to the cell wall. It carries out the reaction Hydrolysis of terminal, non-reducing beta-D-glucosyl residues with release of beta-D-glucose.. The protein operates within glycan metabolism; cellulose degradation. Beta-glucosidases are one of a number of cellulolytic enzymes involved in the degradation of cellulosic biomass. Catalyzes the last step releasing glucose from the inhibitory cellobiose. The polypeptide is Probable beta-glucosidase btgE (btgE) (Aspergillus terreus (strain NIH 2624 / FGSC A1156)).